An 877-amino-acid polypeptide reads, in one-letter code: Probable alpha/beta-glucosidase agdC (877 aa).

The signal sequence occupies residues 1-14 (MLGSLLLLAPLAGA). N171, N293, and N373 each carry an N-linked (GlcNAc...) asparagine glycan. The Nucleophile role is filled by D422. E425 is an active-site residue. The interval 432–476 (DPCTDPERYSSENNLPPAPPPVRSSSPRPLPGFPADFQPSSASRS) is disordered. Over residues 447 to 463 (PPAPPPVRSSSPRPLPG) the composition is skewed to pro residues. Residue N508 is glycosylated (N-linked (GlcNAc...) asparagine). D573 serves as the catalytic Proton donor. N-linked (GlcNAc...) asparagine glycans are attached at residues N574, N610, and N744.

This sequence belongs to the glycosyl hydrolase 31 family.

It localises to the secreted. It catalyses the reaction Hydrolysis of terminal, non-reducing (1-&gt;4)-linked alpha-D-glucose residues with release of alpha-D-glucose.. The catalysed reaction is Hydrolysis of terminal, non-reducing beta-D-glucosyl residues with release of beta-D-glucose.. In terms of biological role, glucosidase involved in the degradation of cellulosic biomass. Has both alpha- and beta-glucosidase activity. The protein is Probable alpha/beta-glucosidase agdC (agdC) of Aspergillus flavus (strain ATCC 200026 / FGSC A1120 / IAM 13836 / NRRL 3357 / JCM 12722 / SRRC 167).